The sequence spans 474 residues: Siroheme synthase (474 aa).

The interval 1–203 (MDYLPIFLKL…GRAEDAERVL (203 aa)) is precorrin-2 dehydrogenase /sirohydrochlorin ferrochelatase. NAD(+) is bound by residues 22-23 (EV) and 43-44 (AS). Residues 219 to 474 (GSVALVGAGP…QETEGRSGNG (256 aa)) are uroporphyrinogen-III C-methyltransferase. An S-adenosyl-L-methionine-binding site is contributed by Pro228. Asp251 serves as the catalytic Proton acceptor. The active-site Proton donor is Lys273. S-adenosyl-L-methionine contacts are provided by residues 304 to 306 (GGD), Ile309, 334 to 335 (TA), Met387, and Gly416.

In the N-terminal section; belongs to the precorrin-2 dehydrogenase / sirohydrochlorin ferrochelatase family. The protein in the C-terminal section; belongs to the precorrin methyltransferase family.

The catalysed reaction is uroporphyrinogen III + 2 S-adenosyl-L-methionine = precorrin-2 + 2 S-adenosyl-L-homocysteine + H(+). It carries out the reaction precorrin-2 + NAD(+) = sirohydrochlorin + NADH + 2 H(+). The enzyme catalyses siroheme + 2 H(+) = sirohydrochlorin + Fe(2+). It functions in the pathway cofactor biosynthesis; adenosylcobalamin biosynthesis; precorrin-2 from uroporphyrinogen III: step 1/1. The protein operates within cofactor biosynthesis; adenosylcobalamin biosynthesis; sirohydrochlorin from precorrin-2: step 1/1. Its pathway is porphyrin-containing compound metabolism; siroheme biosynthesis; precorrin-2 from uroporphyrinogen III: step 1/1. It participates in porphyrin-containing compound metabolism; siroheme biosynthesis; siroheme from sirohydrochlorin: step 1/1. It functions in the pathway porphyrin-containing compound metabolism; siroheme biosynthesis; sirohydrochlorin from precorrin-2: step 1/1. Functionally, multifunctional enzyme that catalyzes the SAM-dependent methylations of uroporphyrinogen III at position C-2 and C-7 to form precorrin-2 via precorrin-1. Then it catalyzes the NAD-dependent ring dehydrogenation of precorrin-2 to yield sirohydrochlorin. Finally, it catalyzes the ferrochelation of sirohydrochlorin to yield siroheme. The protein is Siroheme synthase of Methylococcus capsulatus (strain ATCC 33009 / NCIMB 11132 / Bath).